The chain runs to 169 residues: Ribosome maturation factor RimM (169 aa).

The region spanning 95 to 169 is the PRC barrel domain; it reads EDGYYWTDLI…QITVDWELGY (75 aa).

The protein belongs to the RimM family. As to quaternary structure, binds ribosomal protein uS19.

The protein localises to the cytoplasm. An accessory protein needed during the final step in the assembly of 30S ribosomal subunit, possibly for assembly of the head region. Essential for efficient processing of 16S rRNA. May be needed both before and after RbfA during the maturation of 16S rRNA. It has affinity for free ribosomal 30S subunits but not for 70S ribosomes. The polypeptide is Ribosome maturation factor RimM (Nitrosomonas europaea (strain ATCC 19718 / CIP 103999 / KCTC 2705 / NBRC 14298)).